Here is a 641-residue protein sequence, read N- to C-terminus: Glycerol metabolism operon regulatory protein (641 aa).

The interval 1–318 (MTTHTQDIGK…MRQLMTSQLG (318 aa)) is sensor domain. The GAF domain occupies 52-189 (ALLTIAQAAL…AIAREVGNSL (138 aa)). Residues 203 to 265 (NQMYGLLESM…MLLRRAIKHA (63 aa)) form the PAS domain. One can recognise a Sigma-54 factor interaction domain in the interval 327-552 (MSTDDPETRR…LNSIIENIAI (226 aa)). ATP contacts are provided by residues 355 to 362 (GEEGVGKE) and 415 to 424 (ANGGTLFLEK).

Transcriptional activator of the glycerol utilization dha operon. This is Glycerol metabolism operon regulatory protein from Citrobacter freundii.